A 59-amino-acid chain; its full sequence is Large ribosomal subunit protein uL30 (59 aa).

The protein belongs to the universal ribosomal protein uL30 family. Part of the 50S ribosomal subunit.

The chain is Large ribosomal subunit protein uL30 from Syntrophotalea carbinolica (strain DSM 2380 / NBRC 103641 / GraBd1) (Pelobacter carbinolicus).